Consider the following 58-residue polypeptide: Photosystem II reaction center X protein (58 aa).

The chain crosses the membrane as a helical span at residues Ile-27–Trp-47.

It belongs to the PsbX family. Type 2 subfamily. As to quaternary structure, PSII consists of a core antenna complex that captures photons, and an electron transfer chain that converts photonic excitation into a charge separation. PSII forms dimeric complexes.

The protein resides in the cellular thylakoid membrane. Its function is as follows. Involved in the binding and/or turnover of quinones at the Q(B) site of Photosystem II. This Prochlorococcus marinus (strain MIT 9211) protein is Photosystem II reaction center X protein.